The following is a 324-amino-acid chain: Beta-ketoacyl-[acyl-carrier-protein] synthase III (324 aa).

Residues Cys112 and His249 contribute to the active site. Positions 250–254 (QANRR) are ACP-binding. Asn279 is a catalytic residue.

This sequence belongs to the thiolase-like superfamily. FabH family. Homodimer.

It localises to the cytoplasm. It catalyses the reaction malonyl-[ACP] + acetyl-CoA + H(+) = 3-oxobutanoyl-[ACP] + CO2 + CoA. Its pathway is lipid metabolism; fatty acid biosynthesis. Its function is as follows. Catalyzes the condensation reaction of fatty acid synthesis by the addition to an acyl acceptor of two carbons from malonyl-ACP. Catalyzes the first condensation reaction which initiates fatty acid synthesis and may therefore play a role in governing the total rate of fatty acid production. Possesses both acetoacetyl-ACP synthase and acetyl transacylase activities. Its substrate specificity determines the biosynthesis of branched-chain and/or straight-chain of fatty acids. This chain is Beta-ketoacyl-[acyl-carrier-protein] synthase III, found in Streptococcus pyogenes serotype M6 (strain ATCC BAA-946 / MGAS10394).